The chain runs to 522 residues: Maturase K (522 aa).

The protein belongs to the intron maturase 2 family. MatK subfamily.

It localises to the plastid. Its subcellular location is the chloroplast. In terms of biological role, usually encoded in the trnK tRNA gene intron. Probably assists in splicing its own and other chloroplast group II introns. The protein is Maturase K of Sapindus saponaria (Soapberry).